The sequence spans 295 residues: Energy-coupling factor transporter ATP-binding protein EcfA2 (295 aa).

Residues 3–246 (ITFKQVDFTY…PAWLTAHQLG (244 aa)) enclose the ABC transporter domain. ATP is bound at residue 40–47 (GHTGSGKS).

Belongs to the ABC transporter superfamily. Energy-coupling factor EcfA family. Forms a stable energy-coupling factor (ECF) transporter complex composed of 2 membrane-embedded substrate-binding proteins (S component), 2 ATP-binding proteins (A component) and 2 transmembrane proteins (T component).

It is found in the cell membrane. Its function is as follows. ATP-binding (A) component of a common energy-coupling factor (ECF) ABC-transporter complex. Unlike classic ABC transporters this ECF transporter provides the energy necessary to transport a number of different substrates. The polypeptide is Energy-coupling factor transporter ATP-binding protein EcfA2 (Lactiplantibacillus plantarum (strain ATCC BAA-793 / NCIMB 8826 / WCFS1) (Lactobacillus plantarum)).